The sequence spans 152 residues: Deoxyuridine 5'-triphosphate nucleotidohydrolase (152 aa).

Substrate contacts are provided by residues arginine 71–glycine 73, asparagine 84, leucine 88–aspartate 90, and methionine 98.

Belongs to the dUTPase family. It depends on Mg(2+) as a cofactor.

It catalyses the reaction dUTP + H2O = dUMP + diphosphate + H(+). It participates in pyrimidine metabolism; dUMP biosynthesis; dUMP from dCTP (dUTP route): step 2/2. Its function is as follows. This enzyme is involved in nucleotide metabolism: it produces dUMP, the immediate precursor of thymidine nucleotides and it decreases the intracellular concentration of dUTP so that uracil cannot be incorporated into DNA. The chain is Deoxyuridine 5'-triphosphate nucleotidohydrolase from Shewanella oneidensis (strain ATCC 700550 / JCM 31522 / CIP 106686 / LMG 19005 / NCIMB 14063 / MR-1).